The primary structure comprises 352 residues: N-lysine methyltransferase KMT5A (352 aa).

The interval 21–51 (AVAATAPGPEMVERRGPGRPRTNGENVFTGQ) is disordered. The residue at position 59 (serine 59) is a Phosphoserine. The interval 87-202 (PLAGIYRKRD…KSKAELQSEE (116 aa)) is disordered. The segment covering 109–121 (MKAEEQKIKDARR) has biased composition (basic and acidic residues). A Phosphothreonine modification is found at threonine 140. Basic residues predominate over residues 156 to 172 (GLKKPVRGKQAPRKKAQ). Residues 216–337 (EGMKIDLIDG…AGEELLYDYG (122 aa)) form the SET domain. S-adenosyl-L-methionine contacts are provided by residues 226-228 (KGR), tyrosine 271, and 298-299 (NH).

The protein belongs to the class V-like SAM-binding methyltransferase superfamily. Histone-lysine methyltransferase family. PR/SET subfamily. Interacts with L3MBTL1. Interacts with SIRT2 (phosphorylated form); the interaction is direct, stimulates KMT5A-mediated methyltransferase activity at histone H4 'Lys-20' (H4K20me1) and is increased in a H(2)O(2)-induced oxidative stress-dependent manner. Post-translationally, ubiquitinated and degraded by the DCX(DTL) complex.

It localises to the nucleus. The protein localises to the chromosome. It carries out the reaction L-lysyl(20)-[histone H4] + S-adenosyl-L-methionine = N(6)-methyl-L-lysyl(20)-[histone H4] + S-adenosyl-L-homocysteine + H(+). The catalysed reaction is L-lysyl-[protein] + S-adenosyl-L-methionine = N(6)-methyl-L-lysyl-[protein] + S-adenosyl-L-homocysteine + H(+). In terms of biological role, protein-lysine N-methyltransferase that monomethylates both histones and non-histone proteins. Specifically monomethylates 'Lys-20' of histone H4 (H4K20me1). H4K20me1 is enriched during mitosis and represents a specific tag for epigenetic transcriptional repression. Mainly functions in euchromatin regions, thereby playing a central role in the silencing of euchromatic genes. Required for cell proliferation, probably by contributing to the maintenance of proper higher-order structure of DNA during mitosis. Involved in chromosome condensation and proper cytokinesis. Nucleosomes are preferred as substrate compared to free histones. Mediates monomethylation of p53/TP53 at 'Lys-382', leading to repress p53/TP53-target genes. Plays a negative role in TGF-beta response regulation and a positive role in cell migration. This is N-lysine methyltransferase KMT5A from Bos taurus (Bovine).